The chain runs to 316 residues: Olfactory receptor 12D3 (316 aa).

At 1–23 the chain is on the extracellular side; that stretch reads MENVTTMNEFLLLGLTGVQELQP. The N-linked (GlcNAc...) asparagine glycan is linked to Asn-3. Residues 24 to 44 traverse the membrane as a helical segment; the sequence is FFFGIFLIIYLINLIGNGSIL. At 45–52 the chain is on the cytoplasmic side; it reads VMVVLEPQ. A helical membrane pass occupies residues 53 to 73; that stretch reads LHSPMYFFLGNLSCLDISYSS. The Extracellular segment spans residues 74-97; that stretch reads VTLPKLLVNLVCSRRAISFLGCIT. A disulfide bond links Cys-95 and Cys-187. A helical transmembrane segment spans residues 98–118; sequence QLHFFHFLGSTEAILLAIMAF. The Cytoplasmic portion of the chain corresponds to 119-137; sequence DRFVAICNPLRYTVIMNPQ. The helical transmembrane segment at 138–158 threads the bilayer; that stretch reads VCILLAAAAWLISFFYALMHS. The Extracellular portion of the chain corresponds to 159 to 195; the sequence is VMTAHLSFCGSQKLNHFFYDVKPLLELACSDTLLNQW. A helical transmembrane segment spans residues 196–215; it reads LLSIVTGSISMGAFFLTLLS. The Cytoplasmic portion of the chain corresponds to 216 to 236; it reads CFYVIGFLLFKNRSCRILHKA. Residues 237–257 traverse the membrane as a helical segment; it reads LSTCASHFMVVCLFYGPVGFT. At 258–270 the chain is on the extracellular side; sequence YIRPASATSMIQD. A helical transmembrane segment spans residues 271–291; the sequence is RIMAIMYSAVTPVLNPLIYTL. The Cytoplasmic segment spans residues 292–316; that stretch reads RNKEVMMALKKIFGRKLFKDWQQHH.

The protein belongs to the G-protein coupled receptor 1 family.

It localises to the cell membrane. In terms of biological role, odorant receptor. In Homo sapiens (Human), this protein is Olfactory receptor 12D3 (OR12D3).